Reading from the N-terminus, the 337-residue chain is DNA-directed RNA polymerase subunit alpha (337 aa).

Positions 1–231 (MRNITISAYT…KQLSVFDKIT (231 aa)) are alpha N-terminal domain (alpha-NTD). The alpha C-terminal domain (alpha-CTD) stretch occupies residues 248 to 337 (NTKLLQNITD…IAELKAQNEG (90 aa)).

This sequence belongs to the RNA polymerase alpha chain family. In terms of assembly, homodimer. The RNAP catalytic core consists of 2 alpha, 1 beta, 1 beta' and 1 omega subunit. When a sigma factor is associated with the core the holoenzyme is formed, which can initiate transcription.

It carries out the reaction RNA(n) + a ribonucleoside 5'-triphosphate = RNA(n+1) + diphosphate. Its function is as follows. DNA-dependent RNA polymerase catalyzes the transcription of DNA into RNA using the four ribonucleoside triphosphates as substrates. This chain is DNA-directed RNA polymerase subunit alpha, found in Campylobacter jejuni subsp. doylei (strain ATCC BAA-1458 / RM4099 / 269.97).